The primary structure comprises 719 residues: Catalase-3 (719 aa).

Residues 1–18 (MRVNALLPLSGLIGTALA) form the signal peptide. Positions 19-30 (ACPFADPSALGR) are excised as a propeptide. Active-site residues include histidine 102 and asparagine 175. Tyrosine 389 lines the heme pocket.

It belongs to the catalase family. It depends on heme as a cofactor.

It carries out the reaction 2 H2O2 = O2 + 2 H2O. Occurs in almost all aerobically respiring organisms and serves to protect cells from the toxic effects of hydrogen peroxide. This chain is Catalase-3 (cat-3), found in Neurospora crassa (strain ATCC 24698 / 74-OR23-1A / CBS 708.71 / DSM 1257 / FGSC 987).